Here is a 229-residue protein sequence, read N- to C-terminus: uncharacterized protein (229 aa).

This is an uncharacterized protein from Bacillus subtilis (strain 168).